Reading from the N-terminus, the 304-residue chain is Protease HtpX homolog (304 aa).

2 consecutive transmembrane segments (helical) span residues 14–34 (IFII…IGII) and 39–59 (YLNG…IMVM). Residue H144 coordinates Zn(2+). The active site involves E145. H148 lines the Zn(2+) pocket. A run of 2 helical transmembrane segments spans residues 159 to 179 (IAIA…RMIF) and 202 to 222 (AIIY…ATAI). E231 lines the Zn(2+) pocket.

Belongs to the peptidase M48B family. Zn(2+) is required as a cofactor.

It localises to the cell membrane. The sequence is that of Protease HtpX homolog from Listeria monocytogenes serovar 1/2a (strain ATCC BAA-679 / EGD-e).